The following is a 239-amino-acid chain: 6-phosphogluconolactonase (239 aa).

This sequence belongs to the glucosamine/galactosamine-6-phosphate isomerase family. 6-phosphogluconolactonase subfamily.

The catalysed reaction is 6-phospho-D-glucono-1,5-lactone + H2O = 6-phospho-D-gluconate + H(+). Its pathway is carbohydrate degradation; pentose phosphate pathway; D-ribulose 5-phosphate from D-glucose 6-phosphate (oxidative stage): step 2/3. Hydrolysis of 6-phosphogluconolactone to 6-phosphogluconate. The protein is 6-phosphogluconolactonase (pgl) of Xylella fastidiosa (strain Temecula1 / ATCC 700964).